The chain runs to 566 residues: Pyrophosphate--fructose 6-phosphate 1-phosphotransferase subunit beta 1 (566 aa).

Ser-16 carries the post-translational modification Phosphoserine. Gly-105 lines the diphosphate pocket. Residue Asp-199 coordinates Mg(2+). Substrate is bound by residues 227 to 229 (TID), 266 to 267 (KY), 274 to 276 (MGR), Glu-335, and 440 to 443 (YEGR). Asp-229 acts as the Proton acceptor in catalysis.

Belongs to the phosphofructokinase type A (PFKA) family. PPi-dependent PFK group II subfamily. Clade 'Long' sub-subfamily. Tetramer of two alpha (regulatory) and two beta (catalytic) chains. Mg(2+) is required as a cofactor.

The protein localises to the cytoplasm. It catalyses the reaction beta-D-fructose 6-phosphate + diphosphate = beta-D-fructose 1,6-bisphosphate + phosphate + H(+). It participates in carbohydrate degradation; glycolysis; D-glyceraldehyde 3-phosphate and glycerone phosphate from D-glucose: step 3/4. Its activity is regulated as follows. Allosterically activated by fructose 2,6-bisphosphate. In terms of biological role, catalytic subunit of pyrophosphate--fructose 6-phosphate 1-phosphotransferase. Catalyzes the phosphorylation of D-fructose 6-phosphate, the first committing step of glycolysis. Uses inorganic phosphate (PPi) as phosphoryl donor instead of ATP like common ATP-dependent phosphofructokinases (ATP-PFKs), which renders the reaction reversible, and can thus function both in glycolysis and gluconeogenesis. This chain is Pyrophosphate--fructose 6-phosphate 1-phosphotransferase subunit beta 1, found in Arabidopsis thaliana (Mouse-ear cress).